The following is a 160-amino-acid chain: Vegetative-specific protein V4 (160 aa).

3 repeat units span residues 151-153, 154-156, and 157-159. The segment at 151-159 is 3 X 3 AA tandem repeats of N-Q-[PG]; sequence NQPNQPNQG.

Unknown. Its expression during growth is not required for growth but for the proper initiation of development, therefore playing a role in the transition from growth to development. This Dictyostelium discoideum (Social amoeba) protein is Vegetative-specific protein V4 (lmcB).